Reading from the N-terminus, the 180-residue chain is ADP-ribosylation factor 4 (180 aa).

Gly-2 carries the N-myristoyl glycine lipid modification. GTP contacts are provided by residues 24 to 31 (GLDAAGKT), 67 to 71 (DVGGQ), and 126 to 129 (NKQD). At Ser-147 the chain carries Phosphoserine.

The protein belongs to the small GTPase superfamily. Arf family. In terms of assembly, forms a complex containing RAB11A, ASAP1, RAB3IP, RAP11FIP3 and ARF4; the complex promotes preciliary trafficking; the complex binds to RHO in photoreceptor cells and promotes RHO ciliary transport.

It is found in the golgi apparatus. The protein localises to the membrane. Functionally, GTP-binding protein that functions as an allosteric activator of the cholera toxin catalytic subunit, an ADP-ribosyltransferase. Involved in protein trafficking; may modulate vesicle budding and uncoating within the Golgi apparatus. Part of the ciliary targeting complex containing Rab11, ASAP1, Rabin8/RAB3IP, RAB11FIP3 and ARF4, which direct preciliary vesicle trafficking to mother centriole and ciliogenesis initiation. The chain is ADP-ribosylation factor 4 (ARF4) from Bos taurus (Bovine).